Reading from the N-terminus, the 357-residue chain is MSLTRLLIKDFRNIENADLALSPGFNFLVGANGSGKTSVLEAIYTLGHGRAFRSLQIGRVIRHEQDAFILHGRLQGDEREVSVGLTKDRNGDSTVRIDGSDGHKVAELAQLMPMQLITPEGFTLLGGGPKYRRAFLDWGCFHNEPGFFVAWSNLKRLLKQRNAALRQVTRYEQLRPWDRELVPLAEQISQWRASYSEAIANDMADTCAQFLPEFSLTFSFQRGWEKESDYADVLERGFERDRMLTYTAHGPHKADFRIRADGAPVEDTLSRGQLKLLMCALRLAQGEFLTRESGRRCLYLIDDFASELDDARRGLLAQRLKATQSQVFVSAISAEHILDMTDKNSKMFAVDQGKITD.

30–37 (GANGSGKT) contributes to the ATP binding site.

This sequence belongs to the RecF family.

It localises to the cytoplasm. Functionally, the RecF protein is involved in DNA metabolism; it is required for DNA replication and normal SOS inducibility. RecF binds preferentially to single-stranded, linear DNA. It also seems to bind ATP. The sequence is that of DNA replication and repair protein RecF from Cronobacter sakazakii (strain ATCC BAA-894) (Enterobacter sakazakii).